The sequence spans 51 residues: Large ribosomal subunit protein bL33 (51 aa).

Belongs to the bacterial ribosomal protein bL33 family.

This Marinobacter nauticus (strain ATCC 700491 / DSM 11845 / VT8) (Marinobacter aquaeolei) protein is Large ribosomal subunit protein bL33.